Reading from the N-terminus, the 196-residue chain is Large ribosomal subunit protein bL20 (196 aa).

The protein belongs to the bacterial ribosomal protein bL20 family.

Binds directly to 23S ribosomal RNA and is necessary for the in vitro assembly process of the 50S ribosomal subunit. It is not involved in the protein synthesizing functions of that subunit. This chain is Large ribosomal subunit protein bL20 (rplT), found in Oenococcus oeni (strain ATCC BAA-331 / PSU-1).